The primary structure comprises 420 residues: UDP-N-acetylglucosamine 1-carboxyvinyltransferase (420 aa).

22–23 (KN) provides a ligand contact to phosphoenolpyruvate. Arg94 is a UDP-N-acetyl-alpha-D-glucosamine binding site. The active-site Proton donor is Cys118. Cys118 bears the 2-(S-cysteinyl)pyruvic acid O-phosphothioketal mark. UDP-N-acetyl-alpha-D-glucosamine-binding residues include Asp306 and Ile328.

It belongs to the EPSP synthase family. MurA subfamily.

Its subcellular location is the cytoplasm. It carries out the reaction phosphoenolpyruvate + UDP-N-acetyl-alpha-D-glucosamine = UDP-N-acetyl-3-O-(1-carboxyvinyl)-alpha-D-glucosamine + phosphate. Its pathway is cell wall biogenesis; peptidoglycan biosynthesis. In terms of biological role, cell wall formation. Adds enolpyruvyl to UDP-N-acetylglucosamine. The polypeptide is UDP-N-acetylglucosamine 1-carboxyvinyltransferase (Jannaschia sp. (strain CCS1)).